The primary structure comprises 748 residues: Structure-specific endonuclease subunit SLX4 (748 aa).

Over residues 62–75 (KSVTAQKSPMTQET) the composition is skewed to polar residues. Positions 62-104 (KSVTAQKSPMTQETTKNDTERNKDVDKSCNPVSTSHPDLGGSN) are disordered. Thr72 is modified (phosphothreonine; by ATR and ATM). A compositionally biased stretch (basic and acidic residues) spans 76–88 (TKNDTERNKDVDK). Thr113 carries the post-translational modification Phosphothreonine; by ATR and ATM. Disordered stretches follow at residues 215 to 236 (IKTQ…KGEK) and 277 to 303 (EKSS…PPEL). Residues 222 to 236 (NSDKPPRARNNKGEK) are compositionally biased toward basic and acidic residues. A compositionally biased stretch (polar residues) spans 277-298 (EKSSNSLDNQESSQQRLWTASQ). Ser289 bears the Phosphoserine; by ATR and ATM mark. At Thr319 the chain carries Phosphothreonine; by ATR and ATM. Ser329 and Ser355 each carry phosphoserine; by ATR and ATM. Over residues 591–602 (ISTKDSTQNPTT) the composition is skewed to polar residues. Positions 591-610 (ISTKDSTQNPTTSNDIIDTS) are disordered.

It belongs to the SLX4 family. Forms a heterodimer with SLX1. Interacts with RAD1; catalytic subunit of the RAD1-RAD10 endonuclease. Interacts with RTT107. Phosphorylated by ATR (MEC1) and ATM (TEL1) upon DNA damage. This appears to be required for the function with the RAD1-RAD10 endonuclease.

Its subcellular location is the nucleus. The protein localises to the cytoplasm. Functionally, regulatory subunit that interacts with and increases the activity of different structure-specific endonucleases. Has several distinct roles in protecting genome stability by resolving diverse forms of deleterious DNA structures. Component of the SLX1-SLX4 structure-specific endonuclease that resolves DNA secondary structures generated during DNA repair and recombination. Has endonuclease activity towards branched DNA substrates, introducing single-strand cuts in duplex DNA close to junctions with ss-DNA. Has a preference for simple Y, 5'-flap and replication fork-like structures. It cleaves the strand bearing the 5'-non-homologous arm at the branch site junction and generates ligatable, nicked products from the 5'-flap or replication fork substrates. Plays a critical role in maintaining the integrity of the ribosomal DNA (rDNA) loci, where it has a role in re-starting stalled replication forks. Has Holliday junction resolvase activity in vitro. Interacts with the structure-specific RAD1-RAD10 endonuclease and promotes RAD1-RAD10-dependent 3'-non-homologous tail removal (NHTR) during repair of double-strand breaks by single-strand annealing. SLX4 also promotes recovery from DNA-alkylation-induced replisome stalling during DNA replication by facilitating the error-free mode of lesion bypass. This does not require SLX1 or RAD1-RAD10, but probably RTT107. In Saccharomyces cerevisiae (strain RM11-1a) (Baker's yeast), this protein is Structure-specific endonuclease subunit SLX4.